A 201-amino-acid chain; its full sequence is Glutathione S-transferase GstA (201 aa).

Residues 1–81 (MKLFYKPGAC…YLADSVPDRQ (81 aa)) form the GST N-terminal domain. Residues C10, K35, V52, 65–66 (EG), N99, and 103–106 (TELH) each bind glutathione. A GST C-terminal domain is found at 87–201 (NSISRYKTIE…QDALSAEGLK (115 aa)).

This sequence belongs to the GST superfamily. Beta family. In terms of assembly, homodimer.

The protein resides in the cytoplasm. It catalyses the reaction RX + glutathione = an S-substituted glutathione + a halide anion + H(+). Conjugation of reduced glutathione to a wide number of exogenous and endogenous hydrophobic electrophiles. This Escherichia coli O157:H7 protein is Glutathione S-transferase GstA (gstA).